The chain runs to 210 residues: Na(+)-translocating NADH-quinone reductase subunit D (210 aa).

6 helical membrane passes run 11–31 (ILAPVLDNNPIALQVLGVCSA), 42–62 (FVMTIAVMFVTALSNFFVSLI), 72–92 (IIVQMAIIASLVIVVDQVLKA), 103–123 (VFVGLIITNCIVMGRAEAFAM), 131–151 (FIDGLGNGLGYGFVLITVGFF), and 178–198 (NGLMLLAPSAFFLIGFLIWAI).

It belongs to the NqrDE/RnfAE family. Composed of six subunits; NqrA, NqrB, NqrC, NqrD, NqrE and NqrF.

Its subcellular location is the cell inner membrane. The catalysed reaction is a ubiquinone + n Na(+)(in) + NADH + H(+) = a ubiquinol + n Na(+)(out) + NAD(+). Functionally, NQR complex catalyzes the reduction of ubiquinone-1 to ubiquinol by two successive reactions, coupled with the transport of Na(+) ions from the cytoplasm to the periplasm. NqrA to NqrE are probably involved in the second step, the conversion of ubisemiquinone to ubiquinol. This is Na(+)-translocating NADH-quinone reductase subunit D from Vibrio atlanticus (strain LGP32) (Vibrio splendidus (strain Mel32)).